Here is a 308-residue protein sequence, read N- to C-terminus: Glycerol-3-phosphate dehydrogenase [NAD(P)+] (308 aa).

Residues tryptophan 13, arginine 33, and lysine 81 each contribute to the NADPH site. Lysine 81 and glycine 109 together coordinate sn-glycerol 3-phosphate. Residue alanine 113 coordinates NADPH. Positions 163, 216, 226, 227, and 228 each coordinate sn-glycerol 3-phosphate. The active-site Proton acceptor is the lysine 163. Arginine 227 contributes to the NADPH binding site. An NADPH-binding site is contributed by glutamate 253.

This sequence belongs to the NAD-dependent glycerol-3-phosphate dehydrogenase family.

The protein localises to the cytoplasm. It catalyses the reaction sn-glycerol 3-phosphate + NAD(+) = dihydroxyacetone phosphate + NADH + H(+). The enzyme catalyses sn-glycerol 3-phosphate + NADP(+) = dihydroxyacetone phosphate + NADPH + H(+). It functions in the pathway membrane lipid metabolism; glycerophospholipid metabolism. In terms of biological role, catalyzes the reduction of the glycolytic intermediate dihydroxyacetone phosphate (DHAP) to sn-glycerol 3-phosphate (G3P), the key precursor for phospholipid synthesis. The chain is Glycerol-3-phosphate dehydrogenase [NAD(P)+] from Thermosynechococcus vestitus (strain NIES-2133 / IAM M-273 / BP-1).